The following is a 267-amino-acid chain: MSRLKIPSQLLRGGRGFSVLSRPAANYAGHVPLTPVERCTMAVGSAIGSLLNPRRHDLIATLGETTATPYFIYRLRDAMLSDPTGRRILRDRPRITSQTLSLPYLRSLPPTSLGATFASWLDREGVSPDTRSRVRYIDDEECAYVMQRYRECHDFYHAVTGLPIVVEGELALKIFEYMNTGLPMTGLSAAAVVRLKGAERQRFWDVYLPWAVRSGAGSKELICVYWEELLERDVGELRAELGIEVPPDMREMRRRHRKQKQQEKQEK.

The N-terminal 17 residues, 1–17, are a transit peptide targeting the mitochondrion; the sequence is MSRLKIPSQLLRGGRGF. 4 residues coordinate Zn(2+): His153, Asp154, His157, and Glu169.

The protein belongs to the COQ4 family. As to quaternary structure, component of a multi-subunit COQ enzyme complex, composed of at least COQ3, COQ4, COQ5, COQ6, COQ7 and COQ9. It depends on Zn(2+) as a cofactor.

The protein localises to the mitochondrion inner membrane. It catalyses the reaction a 4-hydroxy-3-methoxy-5-(all-trans-polyprenyl)benzoate + H(+) = a 2-methoxy-6-(all-trans-polyprenyl)phenol + CO2. The protein operates within cofactor biosynthesis; ubiquinone biosynthesis. Its function is as follows. Lyase that catalyzes the C1-decarboxylation of 4-hydroxy-3-methoxy-5-(all-trans-polyprenyl)benzoic acid into 2-methoxy-6-(all-trans-polyprenyl)phenol during ubiquinone biosynthesis. The chain is Ubiquinone biosynthesis protein COQ4, mitochondrial from Arthroderma otae (strain ATCC MYA-4605 / CBS 113480) (Microsporum canis).